We begin with the raw amino-acid sequence, 189 residues long: Large ribosomal subunit protein uL5 (189 aa).

This sequence belongs to the universal ribosomal protein uL5 family. As to quaternary structure, part of the 50S ribosomal subunit; part of the 5S rRNA/L5/L18/L25 subcomplex. Contacts the 5S rRNA and the P site tRNA. Forms a bridge to the 30S subunit in the 70S ribosome.

In terms of biological role, this is one of the proteins that bind and probably mediate the attachment of the 5S RNA into the large ribosomal subunit, where it forms part of the central protuberance. In the 70S ribosome it contacts protein S13 of the 30S subunit (bridge B1b), connecting the 2 subunits; this bridge is implicated in subunit movement. Contacts the P site tRNA; the 5S rRNA and some of its associated proteins might help stabilize positioning of ribosome-bound tRNAs. This is Large ribosomal subunit protein uL5 from Parafrankia sp. (strain EAN1pec).